Here is a 1383-residue protein sequence, read N- to C-terminus: DNA-directed RNA polymerase subunit beta'' (1383 aa).

Zn(2+) contacts are provided by Cys220, Cys289, Cys296, and Cys299.

It belongs to the RNA polymerase beta' chain family. RpoC2 subfamily. As to quaternary structure, in plastids the minimal PEP RNA polymerase catalytic core is composed of four subunits: alpha, beta, beta', and beta''. When a (nuclear-encoded) sigma factor is associated with the core the holoenzyme is formed, which can initiate transcription. It depends on Zn(2+) as a cofactor.

The protein localises to the plastid. It localises to the chloroplast. It catalyses the reaction RNA(n) + a ribonucleoside 5'-triphosphate = RNA(n+1) + diphosphate. In terms of biological role, DNA-dependent RNA polymerase catalyzes the transcription of DNA into RNA using the four ribonucleoside triphosphates as substrates. In Oenothera argillicola (Appalachian evening primrose), this protein is DNA-directed RNA polymerase subunit beta''.